An 833-amino-acid chain; its full sequence is Leucine--tRNA ligase (833 aa).

Positions 41–52 (PYPSGAGLHVGH) match the 'HIGH' region motif. A 'KMSKS' region motif is present at residues 610 to 614 (KMSKS). ATP is bound at residue Lys613.

It belongs to the class-I aminoacyl-tRNA synthetase family.

The protein localises to the cytoplasm. It carries out the reaction tRNA(Leu) + L-leucine + ATP = L-leucyl-tRNA(Leu) + AMP + diphosphate. The protein is Leucine--tRNA ligase of Streptococcus pneumoniae serotype 4 (strain ATCC BAA-334 / TIGR4).